The following is a 604-amino-acid chain: Elongation factor 4 (604 aa).

The region spanning 7–189 (SRLRNFCIIA…AVVDRIPPPA (183 aa)) is the tr-type G domain. GTP is bound by residues 19–24 (DHGKST) and 136–139 (NKID).

It belongs to the TRAFAC class translation factor GTPase superfamily. Classic translation factor GTPase family. LepA subfamily.

The protein resides in the cell inner membrane. The enzyme catalyses GTP + H2O = GDP + phosphate + H(+). Its function is as follows. Required for accurate and efficient protein synthesis under certain stress conditions. May act as a fidelity factor of the translation reaction, by catalyzing a one-codon backward translocation of tRNAs on improperly translocated ribosomes. Back-translocation proceeds from a post-translocation (POST) complex to a pre-translocation (PRE) complex, thus giving elongation factor G a second chance to translocate the tRNAs correctly. Binds to ribosomes in a GTP-dependent manner. This is Elongation factor 4 from Prochlorococcus marinus (strain MIT 9313).